A 109-amino-acid chain; its full sequence is Cell division protein ZapA (109 aa).

The stretch at 21-99 forms a coiled coil; that stretch reads PEQRDALNQA…IEQALLEQGR (79 aa).

Belongs to the ZapA family. Type 1 subfamily. In terms of assembly, homodimer. Interacts with FtsZ.

It is found in the cytoplasm. Functionally, activator of cell division through the inhibition of FtsZ GTPase activity, therefore promoting FtsZ assembly into bundles of protofilaments necessary for the formation of the division Z ring. It is recruited early at mid-cell but it is not essential for cell division. The protein is Cell division protein ZapA of Cronobacter sakazakii (strain ATCC BAA-894) (Enterobacter sakazakii).